The sequence spans 226 residues: UPF0758 protein SPs0978 (226 aa).

The region spanning 103 to 225 (SVLTSVQVAE…YYSFREKSTL (123 aa)) is the MPN domain. Zn(2+)-binding residues include His174, His176, and Asp187. The short motif at 174–187 (HNHPSGNIEPSSND) is the JAMM motif element.

It belongs to the UPF0758 family.

This Streptococcus pyogenes serotype M3 (strain SSI-1) protein is UPF0758 protein SPs0978.